The sequence spans 563 residues: Anaerobic glycerol-3-phosphate dehydrogenase subunit A (563 aa).

20 to 48 (DVIIIGGGATGAGIARDCALRGIDCILLE) contacts FAD.

It belongs to the FAD-dependent glycerol-3-phosphate dehydrogenase family. In terms of assembly, composed of a catalytic GlpA/B dimer and of membrane bound GlpC. The cofactor is FAD. It depends on FMN as a cofactor.

It localises to the cell inner membrane. It catalyses the reaction a quinone + sn-glycerol 3-phosphate = dihydroxyacetone phosphate + a quinol. The protein operates within polyol metabolism; glycerol degradation via glycerol kinase pathway; glycerone phosphate from sn-glycerol 3-phosphate (anaerobic route): step 1/1. The chain is Anaerobic glycerol-3-phosphate dehydrogenase subunit A (glpA) from Haemophilus influenzae (strain ATCC 51907 / DSM 11121 / KW20 / Rd).